A 994-amino-acid polypeptide reads, in one-letter code: Chloride channel protein E (994 aa).

The tract at residues 1–33 (MTRKENEESESLSSSSSPIDNSNNNNNNNNHSI) is disordered. Residues 1–163 (MTRKENEESE…HWLGKERIST (163 aa)) lie on the Cytoplasmic side of the membrane. Low complexity predominate over residues 11–32 (SLSSSSSPIDNSNNNNNNNNHS). Helical transmembrane passes span 164-184 (LLFI…CDFL), 227-247 (IVFV…ISFI), 271-291 (VLGF…SAAG), 300-320 (FMHA…FGAI), 334-354 (ALTS…LFAI), 362-382 (VMGN…IFFL), 410-430 (LITF…FVFI), 449-469 (IILV…AGPL), 505-525 (LLVF…LPIP), 527-547 (GAIT…GEIL), and 554-574 (QAIE…SGTI). Residues 644 to 705 (MKKNINYLSM…LDIHIENIEQ (62 aa)) enclose the CBS 1 domain. Disordered stretches follow at residues 715–767 (FVNN…NSEN), 802–822 (IKPN…SDFE), and 846–872 (DENS…GDGI). 2 stretches are compositionally biased toward low complexity: residues 717 to 764 (NNNN…NSNN) and 809 to 822 (SSSN…SDFE). A compositionally biased stretch (acidic residues) spans 859 to 870 (HDDEDDDEEEGD). The 51-residue stretch at 944-994 (MDLAPSQVPDLTPLNKVFHLFTMLGLGFTYVTSLGKLVGVITKNSLMEQDL) folds into the CBS 2 domain.

It belongs to the chloride channel (TC 2.A.49) family.

Its subcellular location is the membrane. In terms of biological role, voltage-gated chloride channel. Chloride channels may have several functions including the regulation of cell volume, membrane potential stabilization and signal transduction. The chain is Chloride channel protein E (clcE) from Dictyostelium discoideum (Social amoeba).